The following is a 137-amino-acid chain: Large ribosomal subunit protein uL16 (137 aa).

It belongs to the universal ribosomal protein uL16 family. As to quaternary structure, part of the 50S ribosomal subunit.

Functionally, binds 23S rRNA and is also seen to make contacts with the A and possibly P site tRNAs. The chain is Large ribosomal subunit protein uL16 from Mycoplasma mycoides subsp. mycoides SC (strain CCUG 32753 / NCTC 10114 / PG1).